A 1239-amino-acid polypeptide reads, in one-letter code: Anillin (1239 aa).

Disordered stretches follow at residues 32–67, 230–265, 493–621, and 684–716; these read CSVP…SGGG, EAPP…RTKQ, FDNQ…MCNG, and GSTQ…NSFS. A compositionally biased stretch (low complexity) spans 53 to 63; sequence RSRSPGGQSAA. The segment at 126–371 is interaction with and bundling of F-actin; it reads EQAEGGALNP…ENKGTGGQSQ (246 aa). Over residues 252–265 the composition is skewed to basic and acidic residues; that stretch reads PKKDEVDEASRTKQ. Over residues 500–518 the composition is skewed to low complexity; that stretch reads SSVAAQARPPAPAPSRVVR. Residues 519–528 show a composition bias toward pro residues; it reads PMPPPPPPPI. Positions 551 to 563 are enriched in basic and acidic residues; the sequence is EDSKRARKSHSDR. Residues 594-610 are compositionally biased toward acidic residues; it reads DEEETESCMDESDDQSQ. A compositionally biased stretch (polar residues) spans 699–716; it reads ASRLSLGSKGTTASNSFS. The residue at position 712 (Ser712) is a Phosphoserine. Residue Thr740 is modified to Phosphothreonine. 2 positions are modified to phosphoserine: Ser744 and Ser754. Residue Thr831 is modified to Phosphothreonine. Residues 834–861 adopt a coiled-coil conformation; the sequence is DDEEMQNAREVNDASQAQDKIKKLLSEV. The PH domain occupies 1106-1230; sequence SVEYKGFLTM…WCAYLNKALT (125 aa).

Interacts with and bundles F-actin. In terms of tissue distribution, accumulates in the ring canals that interconnect cells of the germline cysts in males and the ovarian follicles in females. These structures develop from arrested contractile rings after a specialized cytokinesis in which the closing of the invaginating plasma membrane is incomplete. Also concentrates in the arrested cleavage furrows that initially link the oocyte to its 15 nurse cells in the early egg chamber and is subsequently lost from these furrows as germline cell division is completed.

The protein localises to the nucleus. Its subcellular location is the cytoplasm. The protein resides in the cytoskeleton. It localises to the cell cortex. It is found in the cell projection. The protein localises to the cilium. Its subcellular location is the flagellum. Its function is as follows. Required for cytokinesis. Essential for the structural integrity of the cleavage furrow and for completion of cleavage furrow ingression and proper formation of the midbody. Required during cellularization of syncytial embryos for the proper formation and function of the furrow canals, the stable inward folds of the plasma membrane which separate the peripheral nuclei. Also required for the formation of the pole cells, the progenitors of the adult germline which are formed by cytokinesis of the cytoplasmic buds at the posterior pole of the syncytial embryo. Essential for embryonic viability. The protein is Anillin (scra) of Drosophila melanogaster (Fruit fly).